The sequence spans 174 residues: Small ribosomal subunit protein uS5 (174 aa).

Positions Leu19–Ile82 constitute an S5 DRBM domain.

Belongs to the universal ribosomal protein uS5 family. In terms of assembly, part of the 30S ribosomal subunit. Contacts proteins S4 and S8.

With S4 and S12 plays an important role in translational accuracy. Functionally, located at the back of the 30S subunit body where it stabilizes the conformation of the head with respect to the body. The protein is Small ribosomal subunit protein uS5 of Aromatoleum aromaticum (strain DSM 19018 / LMG 30748 / EbN1) (Azoarcus sp. (strain EbN1)).